We begin with the raw amino-acid sequence, 205 residues long: Ras-related protein rab-6.2 (205 aa).

GTP is bound by residues 18-25, Thr42, 66-70, and 124-127; these read EQSVGKTS, TAGQE, and KTDL. 2 S-geranylgeranyl cysteine lipidation sites follow: Cys203 and Cys205. Cys205 is modified (cysteine methyl ester).

The protein belongs to the small GTPase superfamily. Rab family. In terms of assembly, interacts with GARP complex component vps-52. Interacts (in GTP-bound form) with lin-10. May interact (in GTP-bound form) with eat-17. Highly expressed in body wall muscles, pharyngeal and vulval muscles, hypodermis, intestine, the gonad, coelomocytes, and neurons, including command interneuron (at protein level). Highly expressed in the terminal bulb muscles.

Its subcellular location is the perikaryon. The protein resides in the cell projection. It localises to the dendrite. The protein localises to the golgi apparatus. It is found in the cytoplasmic vesicle. Functionally, the small GTPases Rab are key regulators of intracellular membrane trafficking, from the formation of transport vesicles to their fusion with membranes. Rabs cycle between an inactive GDP-bound form and an active GTP-bound form that is able to recruit to membranes different set of downstream effectors directly responsible for vesicle formation, movement, tethering and fusion. In its active GTP-bound form, acts redundantly with rab-6.1 (in its active GTP-bound form) to positively regulate the retrograde trafficking of cargo molecules from endosomes to the Golgi compartment. Required for the retrograde trafficking of glr-1, a subunit of AMPA-type glutamate receptors (AMPRs), out of early endosomes and into the Golgi compartment in neurons. Its role in glr-1 trafficking may partly be mediated by its interaction with lin-10 and association with components of the retromer complex such as rme-8. Together with rab-6.2, promotes the retrograde trafficking of mig-14 from endosomes to Golgi structures in the intestine. Plays a role in the epidermis to promote cuticle integrity and impermeability of the cuticle barrier to exogenous molecules. May have a role in the glycosylation of the cuticular surface. Required for seam cell division and alae formation. Required for grinder formation, which is the feeding organ that breaks down food. In contrast to rab-6.1, may play a minor role in the exocytosis of secretory vesicles (cortical granules) during the oocyte-to-embryo transition. The sequence is that of Ras-related protein rab-6.2 from Caenorhabditis elegans.